Reading from the N-terminus, the 398-residue chain is Chalcone synthase 1 (398 aa).

The active site involves Cys-167.

It belongs to the thiolase-like superfamily. Chalcone/stilbene synthases family.

It catalyses the reaction (E)-4-coumaroyl-CoA + 3 malonyl-CoA + 3 H(+) = 2',4,4',6'-tetrahydroxychalcone + 3 CO2 + 4 CoA. It participates in secondary metabolite biosynthesis; flavonoid biosynthesis. Its function is as follows. The primary product of this enzyme is 4,2',4',6'-tetrahydroxychalcone (also termed naringenin-chalcone or chalcone) which can under specific conditions spontaneously isomerize into naringenin. The polypeptide is Chalcone synthase 1 (CHS1) (Gerbera hybrida (Daisy)).